A 259-amino-acid polypeptide reads, in one-letter code: Small ribosomal subunit protein eS1 (259 aa).

At Ala2 the chain carries N-acetylalanine; partial.

The protein belongs to the eukaryotic ribosomal protein eS1 family. Component of the small ribosomal subunit. Mature ribosomes consist of a small (40S) and a large (60S) subunit. The 40S subunit contains about 33 different proteins and 1 molecule of RNA (18S). The 60S subunit contains about 49 different proteins and 3 molecules of RNA (25S, 5.8S and 5S).

Its subcellular location is the cytoplasm. The protein is Small ribosomal subunit protein eS1 of Cryptococcus neoformans var. neoformans serotype D (strain B-3501A) (Filobasidiella neoformans).